A 59-amino-acid chain; its full sequence is uncharacterized protein (59 aa).

A disordered region spans residues 27–59; sequence SCFQNRPPEPASFQNLRPEPASLQNLRTEPTSF. Residues 48-59 are compositionally biased toward polar residues; that stretch reads SLQNLRTEPTSF.

This is an uncharacterized protein from Homo sapiens (Human).